Consider the following 187-residue polypeptide: Proenkephalin-A (187 aa).

4 propeptides span residues 52 to 70 (MDELYPQEPEEEAPAEILA), 80 to 143 (DAEE…KMLQ), 153 to 163 (VGRPEWWMDYQ), and 173 to 187 (FADSLPSDEEGESYS). A disordered region spans residues 81–132 (AEEEEDALASSSDLLKELLGPGETETAAAPRGRDDEDVSKSHGGFMRALKGS). Over residues 88 to 99 (LASSSDLLKELL) the composition is skewed to low complexity. Basic and acidic residues predominate over residues 111-120 (RGRDDEDVSK). Ser-187 carries the post-translational modification Phosphoserine.

It belongs to the opioid neuropeptide precursor family. Post-translationally, processed and degraded by ACE. The N-terminal domain contains 6 conserved cysteines thought to be involved in disulfide bonding and/or processing. In terms of processing, proenkephalin-A is cleaved by CTSL to generate Met-enkephalin.

The protein resides in the cytoplasmic vesicle. The protein localises to the secretory vesicle. It localises to the chromaffin granule lumen. It is found in the secreted. Neuropeptide that competes with and mimic the effects of opiate drugs. They play a role in a number of physiologic functions, including pain perception and responses to stress. The protein is Proenkephalin-A (PENK) of Felis catus (Cat).